A 78-amino-acid polypeptide reads, in one-letter code: Ubiquitin-like protein 1 (78 aa).

It belongs to the ubiquitin family.

This chain is Ubiquitin-like protein 1 (ubl1), found in Schizosaccharomyces pombe (strain 972 / ATCC 24843) (Fission yeast).